The following is a 177-amino-acid chain: MKTIEVDEDLYRYIASQTLHIGESASDILRRLLNVDGELATAAPAAEPKGIVVSKDAAFDTKIDGVKAMRSLLISDEFAGLKNAIDRFMLILSTLHRIDSASFSEATMFKGRKRVYFADNEQTLLASGQTTKPKAIPNTPFWVITNNNTSRKQQMVEQVMVRMGFPSDIIEKVTHSI.

This sequence belongs to the SeqA family. Homodimer. Polymerizes to form helical filaments.

It is found in the cytoplasm. In terms of biological role, negative regulator of replication initiation, which contributes to regulation of DNA replication and ensures that replication initiation occurs exactly once per chromosome per cell cycle. Binds to pairs of hemimethylated GATC sequences in the oriC region, thus preventing assembly of replication proteins and re-initiation at newly replicated origins. Repression is relieved when the region becomes fully methylated. This Vibrio cholerae serotype O1 (strain ATCC 39315 / El Tor Inaba N16961) protein is Negative modulator of initiation of replication.